The chain runs to 128 residues: Glycine cleavage system H protein (128 aa).

The Lipoyl-binding domain maps to 24–106 (VFCVGITDHA…YDEGWLFRIR (83 aa)). K65 bears the N6-lipoyllysine mark.

This sequence belongs to the GcvH family. The glycine cleavage system is composed of four proteins: P, T, L and H. (R)-lipoate is required as a cofactor.

In terms of biological role, the glycine cleavage system catalyzes the degradation of glycine. The H protein shuttles the methylamine group of glycine from the P protein to the T protein. In Edwardsiella ictaluri (strain 93-146), this protein is Glycine cleavage system H protein.